Consider the following 261-residue polypeptide: 3-methyl-2-oxobutanoate hydroxymethyltransferase (261 aa).

The Mg(2+) site is built by Asp-42 and Asp-81. Residues 42-43 (DS), Asp-81, and Lys-110 contribute to the 3-methyl-2-oxobutanoate site. Residue Glu-112 participates in Mg(2+) binding. Glu-179 functions as the Proton acceptor in the catalytic mechanism.

Belongs to the PanB family. In terms of assembly, homodecamer; pentamer of dimers. Mg(2+) serves as cofactor.

The protein localises to the cytoplasm. It carries out the reaction 3-methyl-2-oxobutanoate + (6R)-5,10-methylene-5,6,7,8-tetrahydrofolate + H2O = 2-dehydropantoate + (6S)-5,6,7,8-tetrahydrofolate. It functions in the pathway cofactor biosynthesis; (R)-pantothenate biosynthesis; (R)-pantoate from 3-methyl-2-oxobutanoate: step 1/2. Catalyzes the reversible reaction in which hydroxymethyl group from 5,10-methylenetetrahydrofolate is transferred onto alpha-ketoisovalerate to form ketopantoate. This chain is 3-methyl-2-oxobutanoate hydroxymethyltransferase, found in Thermus thermophilus (strain ATCC BAA-163 / DSM 7039 / HB27).